The chain runs to 151 residues: Putative pre-16S rRNA nuclease (151 aa).

The protein belongs to the YqgF nuclease family.

Its subcellular location is the cytoplasm. Its function is as follows. Could be a nuclease involved in processing of the 5'-end of pre-16S rRNA. This is Putative pre-16S rRNA nuclease from Nostoc sp. (strain PCC 7120 / SAG 25.82 / UTEX 2576).